An 872-amino-acid chain; its full sequence is Alanine--tRNA ligase (872 aa).

Zn(2+) is bound by residues histidine 563, histidine 567, cysteine 665, and histidine 669.

This sequence belongs to the class-II aminoacyl-tRNA synthetase family. The cofactor is Zn(2+).

Its subcellular location is the cytoplasm. The catalysed reaction is tRNA(Ala) + L-alanine + ATP = L-alanyl-tRNA(Ala) + AMP + diphosphate. Functionally, catalyzes the attachment of alanine to tRNA(Ala) in a two-step reaction: alanine is first activated by ATP to form Ala-AMP and then transferred to the acceptor end of tRNA(Ala). Also edits incorrectly charged Ser-tRNA(Ala) and Gly-tRNA(Ala) via its editing domain. The chain is Alanine--tRNA ligase from Bacteroides thetaiotaomicron (strain ATCC 29148 / DSM 2079 / JCM 5827 / CCUG 10774 / NCTC 10582 / VPI-5482 / E50).